Here is a 505-residue protein sequence, read N- to C-terminus: Holliday junction branch migration ATPase PINA (505 aa).

The 105-residue stretch at 2-106 folds into the PINc domain; sequence NDLMLDKSAL…IVTADETQKK (105 aa). The tract at residues 434 to 505 is KH domain; sequence PVNRGITMSN…NIKIKIKLSD (72 aa). The tract at residues 493-505 is required for maximum interaction with Hjc and Hjm; it reads KKNNIKIKIKLSD.

As to quaternary structure, homohexamer; the central pore (25-31 Angstroms) is large enough to hold dsDNA. In PDB:5F4H two of the 6 subunits are in an ATP-binding competent conformation. Interacts with Holliday junction resolvase Hjc; in the presence of HJ DNA this interaction decreases branch migration but not Y-DNA unwinding. Interacts with helicase Hjm (hel308) which decreases the DNA helicase activity of Hjm. Ca(2+) is required as a cofactor.

It carries out the reaction ATP + H2O = ADP + phosphate + H(+). Functionally, promotes Holliday junction (HJ) branch migration and unwinds Y-shaped DNA (but not replication forks or dsDNA) in an ATP hydrolysis-dependent manner. Stimulates cleavage by HJ resolvase Hjc. Unwinds Y-shaped and 3'-flap DNA substrates. In the absence of other proteins stabilizes replication forks (prevents spontaneous unwinding); Hjc, Hjm (Hel308) and PINA coordinate HJ migration and cleavage of replication forks in a coordinated way. Inhibits the 5'-3' (but not 3'-5') helicase activity of helicase Hjm (Hel308) on overhang DNA. Probably acts as an ATP-dependent pump that pulls DNA through the hexamer. The protein is Holliday junction branch migration ATPase PINA of Saccharolobus islandicus (strain REY15A) (Sulfolobus islandicus).